A 162-amino-acid polypeptide reads, in one-letter code: Ribosome maturation factor RimP (162 aa).

Belongs to the RimP family.

Its subcellular location is the cytoplasm. Functionally, required for maturation of 30S ribosomal subunits. The chain is Ribosome maturation factor RimP from Streptococcus gordonii (strain Challis / ATCC 35105 / BCRC 15272 / CH1 / DL1 / V288).